Reading from the N-terminus, the 210-residue chain is Oxygen-insensitive NADPH nitroreductase (210 aa).

Position 150–155 (150–155 (GVSLMG)) interacts with NADP(+).

The protein belongs to the nitroreductase family.

Functionally, reduction of a variety of nitroaromatic compounds using NADPH as source of reducing equivalents; two electrons are transferred. This is Oxygen-insensitive NADPH nitroreductase (rdxA) from Helicobacter pylori (strain J99 / ATCC 700824) (Campylobacter pylori J99).